Here is a 158-residue protein sequence, read N- to C-terminus: Cytochrome c2 (158 aa).

Residue Gln-1 is modified to Pyrrolidone carboxylic acid. Cys-18, Cys-21, His-22, and Met-102 together coordinate heme c. Residues 129-158 form a disordered region; sequence AEAAPAADAAAPAAADAAAPAEPAAEGAAT.

This sequence belongs to the cytochrome c family. In terms of processing, binds 1 heme c group covalently per subunit.

The protein localises to the periplasm. In terms of biological role, cytochrome c2 is found mainly in purple, non-sulfur, photosynthetic bacteria where it functions as the electron donor to the oxidized bacteriochlorophyll in the photophosphorylation pathway. However, it may also have a role in the respiratory chain and is found in some non-photosynthetic bacteria. This is Cytochrome c2 from Fuscovulum blasticum (Rhodobacter blasticus).